A 339-amino-acid chain; its full sequence is 4-amino-5-hydroxymethyl-2-methylpyrimidine phosphate synthase (339 aa).

An N6-(pyridoxal phosphate)lysine modification is found at Lys-62. Residue His-66 is part of the active site. 115–118 (GEFG) is a binding site for pyridoxal 5'-phosphate. The CCCFC; essential for catalytic activity, may be the site of iron coordination signature appears at 195 to 199 (CCCFC).

This sequence belongs to the NMT1/THI5 family. As to quaternary structure, homodimer. Fe(3+) is required as a cofactor.

It catalyses the reaction N(6)-(pyridoxal phosphate)-L-lysyl-[4-amino-5-hydroxymethyl-2-methylpyrimidine phosphate synthase] + L-histidyl-[4-amino-5-hydroxymethyl-2-methylpyrimidine phosphate synthase] + 2 Fe(3+) + 4 H2O = L-lysyl-[4-amino-5-hydroxymethyl-2-methylpyrimidine phosphate synthase] + (2S)-2-amino-5-hydroxy-4-oxopentanoyl-[4-amino-5-hydroxymethyl-2-methylpyrimidine phosphate synthase] + 4-amino-2-methyl-5-(phosphooxymethyl)pyrimidine + 3-oxopropanoate + 2 Fe(2+) + 2 H(+). It participates in cofactor biosynthesis; thiamine diphosphate biosynthesis. Functionally, responsible for the formation of the pyrimidine heterocycle in the thiamine biosynthesis pathway. Catalyzes the formation of hydroxymethylpyrimidine phosphate (HMP-P) from histidine and pyridoxal phosphate (PLP). The protein uses PLP and the active site histidine to form HMP-P, generating an inactive enzyme. The enzyme can only undergo a single turnover, which suggests it is a suicide enzyme. This is 4-amino-5-hydroxymethyl-2-methylpyrimidine phosphate synthase from Candida albicans (strain WO-1) (Yeast).